A 435-amino-acid polypeptide reads, in one-letter code: GTPase Der (435 aa).

EngA-type G domains lie at 8 to 169 (NLVA…NFEN) and 176 to 351 (FKIA…NNLS). GTP contacts are provided by residues 14–21 (GKPNVGKS), 61–65 (DTGGI), 123–126 (NKLD), 182–189 (GKPNAGKS), 229–233 (DTAGI), and 294–297 (NKWD). In terms of domain architecture, KH-like spans 352 to 435 (REIKQNLLND…PINLVLKKNK (84 aa)).

Belongs to the TRAFAC class TrmE-Era-EngA-EngB-Septin-like GTPase superfamily. EngA (Der) GTPase family. Associates with the 50S ribosomal subunit.

GTPase that plays an essential role in the late steps of ribosome biogenesis. This is GTPase Der from Mycoplasmopsis pulmonis (strain UAB CTIP) (Mycoplasma pulmonis).